The following is a 422-amino-acid chain: Adenylosuccinate synthetase (422 aa).

GTP is bound by residues glycine 11–lysine 17 and glycine 39–threonine 41. Aspartate 12 serves as the catalytic Proton acceptor. Mg(2+) contacts are provided by aspartate 12 and glycine 39. IMP contacts are provided by residues aspartate 12–lysine 15, asparagine 37–histidine 40, threonine 129, arginine 143, asparagine 219, threonine 234, and arginine 298. The active-site Proton donor is the histidine 40. Valine 294–arginine 300 lines the substrate pocket. GTP contacts are provided by residues arginine 300, lysine 326–aspartate 328, and glycine 409–glycine 411.

Belongs to the adenylosuccinate synthetase family. Homodimer. The cofactor is Mg(2+).

Its subcellular location is the cytoplasm. It carries out the reaction IMP + L-aspartate + GTP = N(6)-(1,2-dicarboxyethyl)-AMP + GDP + phosphate + 2 H(+). It participates in purine metabolism; AMP biosynthesis via de novo pathway; AMP from IMP: step 1/2. Its function is as follows. Plays an important role in the de novo pathway and in the salvage pathway of purine nucleotide biosynthesis. Catalyzes the first committed step in the biosynthesis of AMP from IMP. The sequence is that of Adenylosuccinate synthetase from Blastomyces gilchristii (strain SLH14081) (Blastomyces dermatitidis).